We begin with the raw amino-acid sequence, 432 residues long: Adenosylhomocysteinase (432 aa).

Substrate-binding residues include Thr-57, Asp-131, and Glu-156. 157 to 159 (TTT) serves as a coordination point for NAD(+). Ser-183 carries the phosphoserine modification. Substrate contacts are provided by Lys-186 and Asp-190. Lys-186 bears the N6-(2-hydroxyisobutyryl)lysine mark. The residue at position 193 (Tyr-193) is a Phosphotyrosine. Residues 222 to 227 (GDVGKG), Glu-243, Asn-248, 299 to 301 (IGH), Asn-346, His-353, Lys-426, 426 to 430 (KPDHY), and Tyr-430 contribute to the NAD(+) site.

Belongs to the adenosylhomocysteinase family. In terms of assembly, homotetramer. Interaction with AHCYL1. It depends on NAD(+) as a cofactor.

It is found in the cytoplasm. It localises to the melanosome. Its subcellular location is the nucleus. The protein resides in the endoplasmic reticulum. The catalysed reaction is S-adenosyl-L-homocysteine + H2O = L-homocysteine + adenosine. Its pathway is amino-acid biosynthesis; L-homocysteine biosynthesis; L-homocysteine from S-adenosyl-L-homocysteine: step 1/1. Catalyzes the hydrolysis of S-adenosyl-L-homocysteine to form adenosine and homocysteine. Binds copper ions. In Rattus norvegicus (Rat), this protein is Adenosylhomocysteinase (Ahcy).